A 1190-amino-acid polypeptide reads, in one-letter code: DNA-directed RNA polymerase subunit beta (1190 aa).

Positions 1155-1190 (ENFDDDDDHAPDAIMVDVKPAEREEAGEEKDAVTKE) are disordered. Basic and acidic residues predominate over residues 1173–1190 (KPAEREEAGEEKDAVTKE).

The protein belongs to the RNA polymerase beta chain family. The RNAP catalytic core consists of 2 alpha, 1 beta, 1 beta' and 1 omega subunit. When a sigma factor is associated with the core the holoenzyme is formed, which can initiate transcription.

The enzyme catalyses RNA(n) + a ribonucleoside 5'-triphosphate = RNA(n+1) + diphosphate. In terms of biological role, DNA-dependent RNA polymerase catalyzes the transcription of DNA into RNA using the four ribonucleoside triphosphates as substrates. This Geobacillus kaustophilus (strain HTA426) protein is DNA-directed RNA polymerase subunit beta.